A 120-amino-acid chain; its full sequence is Large ribosomal subunit protein uL18 (120 aa).

Belongs to the universal ribosomal protein uL18 family. As to quaternary structure, part of the 50S ribosomal subunit; part of the 5S rRNA/L5/L18/L25 subcomplex. Contacts the 5S and 23S rRNAs.

This is one of the proteins that bind and probably mediate the attachment of the 5S RNA into the large ribosomal subunit, where it forms part of the central protuberance. This Nitrobacter hamburgensis (strain DSM 10229 / NCIMB 13809 / X14) protein is Large ribosomal subunit protein uL18.